The chain runs to 883 residues: Valine--tRNA ligase (883 aa).

The 'HIGH' region motif lies at 46-56; that stretch reads PNVTGKLHLGH. Residues 520–524 carry the 'KMSKS' region motif; it reads KMSKS. Residue Lys-523 participates in ATP binding. Residues 809–883 are a coiled coil; the sequence is LADLLNVEEE…RIDEMKKLVK (75 aa).

The protein belongs to the class-I aminoacyl-tRNA synthetase family. ValS type 1 subfamily. Monomer.

Its subcellular location is the cytoplasm. The catalysed reaction is tRNA(Val) + L-valine + ATP = L-valyl-tRNA(Val) + AMP + diphosphate. In terms of biological role, catalyzes the attachment of valine to tRNA(Val). As ValRS can inadvertently accommodate and process structurally similar amino acids such as threonine, to avoid such errors, it has a 'posttransfer' editing activity that hydrolyzes mischarged Thr-tRNA(Val) in a tRNA-dependent manner. In Streptococcus pneumoniae serotype 4 (strain ATCC BAA-334 / TIGR4), this protein is Valine--tRNA ligase.